Consider the following 489-residue polypeptide: Rhamnulokinase (489 aa).

ATP is bound at residue 13–17 (ASSGR). C68 and C222 are disulfide-bonded. Residues G83 and 236–238 (HDT) each bind substrate. D237 acts as the Proton acceptor in catalysis. T259 contacts ATP. A substrate-binding site is contributed by N296. ATP is bound at residue Q304. A disulfide bridge connects residues C353 and C370. G402 contributes to the ATP binding site. A disulfide bridge connects residues C413 and C417.

This sequence belongs to the rhamnulokinase family. The cofactor is Mg(2+).

It carries out the reaction L-rhamnulose + ATP = L-rhamnulose 1-phosphate + ADP + H(+). The protein operates within carbohydrate degradation; L-rhamnose degradation; glycerone phosphate from L-rhamnose: step 2/3. Functionally, involved in the catabolism of L-rhamnose (6-deoxy-L-mannose). Catalyzes the transfer of the gamma-phosphate group from ATP to the 1-hydroxyl group of L-rhamnulose to yield L-rhamnulose 1-phosphate. This chain is Rhamnulokinase, found in Salmonella choleraesuis (strain SC-B67).